Reading from the N-terminus, the 106-residue chain is Nucleoid-associated protein BRADO0764 (106 aa).

This sequence belongs to the YbaB/EbfC family. As to quaternary structure, homodimer.

It is found in the cytoplasm. The protein resides in the nucleoid. In terms of biological role, binds to DNA and alters its conformation. May be involved in regulation of gene expression, nucleoid organization and DNA protection. The sequence is that of Nucleoid-associated protein BRADO0764 from Bradyrhizobium sp. (strain ORS 278).